A 25-amino-acid chain; its full sequence is Small ribosomal subunit protein eS32A (25 aa).

Residues 1–25 (MRDKWRKKRVRRLKRKRRKMRARSK) form a disordered region.

Belongs to the eukaryotic ribosomal protein eS32 family. As to quaternary structure, component of the large ribosomal subunit (LSU). Mature yeast ribosomes consist of a small (40S) and a large (60S) subunit. The 40S small subunit contains 1 molecule of ribosomal RNA (18S rRNA) and at least 33 different proteins. The large 60S subunit contains 3 rRNA molecules (25S, 5.8S and 5S rRNA) and at least 46 different proteins.

The protein localises to the cytoplasm. The protein resides in the nucleus. Its function is as follows. Component of the ribosome, a large ribonucleoprotein complex responsible for the synthesis of proteins in the cell. The small ribosomal subunit (SSU) binds messenger RNAs (mRNAs) and translates the encoded message by selecting cognate aminoacyl-transfer RNA (tRNA) molecules. The large subunit (LSU) contains the ribosomal catalytic site termed the peptidyl transferase center (PTC), which catalyzes the formation of peptide bonds, thereby polymerizing the amino acids delivered by tRNAs into a polypeptide chain. The nascent polypeptides leave the ribosome through a tunnel in the LSU and interact with protein factors that function in enzymatic processing, targeting, and the membrane insertion of nascent chains at the exit of the ribosomal tunnel. This is Small ribosomal subunit protein eS32A (rpl4101) from Schizosaccharomyces pombe (strain 972 / ATCC 24843) (Fission yeast).